Consider the following 241-residue polypeptide: 1-(5-phosphoribosyl)-5-[(5-phosphoribosylamino)methylideneamino] imidazole-4-carboxamide isomerase (241 aa).

Asp10 (proton acceptor) is an active-site residue. The active-site Proton donor is the Asp129.

Belongs to the HisA/HisF family.

It localises to the cytoplasm. It carries out the reaction 1-(5-phospho-beta-D-ribosyl)-5-[(5-phospho-beta-D-ribosylamino)methylideneamino]imidazole-4-carboxamide = 5-[(5-phospho-1-deoxy-D-ribulos-1-ylimino)methylamino]-1-(5-phospho-beta-D-ribosyl)imidazole-4-carboxamide. It functions in the pathway amino-acid biosynthesis; L-histidine biosynthesis; L-histidine from 5-phospho-alpha-D-ribose 1-diphosphate: step 4/9. The sequence is that of 1-(5-phosphoribosyl)-5-[(5-phosphoribosylamino)methylideneamino] imidazole-4-carboxamide isomerase from Salinispora tropica (strain ATCC BAA-916 / DSM 44818 / JCM 13857 / NBRC 105044 / CNB-440).